The primary structure comprises 198 residues: Holliday junction branch migration complex subunit RuvA (198 aa).

The interval 1–63 (MYSYIIGVIT…EDASILYGFS (63 aa)) is domain I. Residues 64–142 (SQKERELFNL…KDFVPSEKPV (79 aa)) are domain II. Positions 143-153 (NKEVKRSNDSE) are flexible linker. Residues 153 to 198 (EFAREALLQLGYFKNDVDAFIENTDISGLSIEDIMKKAMKSLDSSR) are domain III.

It belongs to the RuvA family. As to quaternary structure, homotetramer. Forms an RuvA(8)-RuvB(12)-Holliday junction (HJ) complex. HJ DNA is sandwiched between 2 RuvA tetramers; dsDNA enters through RuvA and exits via RuvB. An RuvB hexamer assembles on each DNA strand where it exits the tetramer. Each RuvB hexamer is contacted by two RuvA subunits (via domain III) on 2 adjacent RuvB subunits; this complex drives branch migration. In the full resolvosome a probable DNA-RuvA(4)-RuvB(12)-RuvC(2) complex forms which resolves the HJ.

Its subcellular location is the cytoplasm. In terms of biological role, the RuvA-RuvB-RuvC complex processes Holliday junction (HJ) DNA during genetic recombination and DNA repair, while the RuvA-RuvB complex plays an important role in the rescue of blocked DNA replication forks via replication fork reversal (RFR). RuvA specifically binds to HJ cruciform DNA, conferring on it an open structure. The RuvB hexamer acts as an ATP-dependent pump, pulling dsDNA into and through the RuvAB complex. HJ branch migration allows RuvC to scan DNA until it finds its consensus sequence, where it cleaves and resolves the cruciform DNA. This is Holliday junction branch migration complex subunit RuvA from Finegoldia magna (strain ATCC 29328 / DSM 20472 / WAL 2508) (Peptostreptococcus magnus).